A 292-amino-acid polypeptide reads, in one-letter code: Elongation factor Ts (292 aa).

The interval 79-82 (TDFV) is involved in Mg(2+) ion dislocation from EF-Tu.

Belongs to the EF-Ts family.

Its subcellular location is the cytoplasm. In terms of biological role, associates with the EF-Tu.GDP complex and induces the exchange of GDP to GTP. It remains bound to the aminoacyl-tRNA.EF-Tu.GTP complex up to the GTP hydrolysis stage on the ribosome. The chain is Elongation factor Ts from Xanthomonas oryzae pv. oryzae (strain MAFF 311018).